Consider the following 503-residue polypeptide: UDP-N-acetylmuramoylalanine--D-glutamate ligase (503 aa).

ATP is bound at residue 129–135; it reads GTNGKTT.

Belongs to the MurCDEF family.

It is found in the cytoplasm. It catalyses the reaction UDP-N-acetyl-alpha-D-muramoyl-L-alanine + D-glutamate + ATP = UDP-N-acetyl-alpha-D-muramoyl-L-alanyl-D-glutamate + ADP + phosphate + H(+). Its pathway is cell wall biogenesis; peptidoglycan biosynthesis. Its function is as follows. Cell wall formation. Catalyzes the addition of glutamate to the nucleotide precursor UDP-N-acetylmuramoyl-L-alanine (UMA). This Burkholderia cenocepacia (strain HI2424) protein is UDP-N-acetylmuramoylalanine--D-glutamate ligase.